A 258-amino-acid chain; its full sequence is Small ribosomal subunit protein uS2 (258 aa).

Belongs to the universal ribosomal protein uS2 family.

The protein is Small ribosomal subunit protein uS2 of Streptococcus suis (strain 05ZYH33).